Reading from the N-terminus, the 352-residue chain is Holliday junction branch migration complex subunit RuvB (352 aa).

The interval 4 to 185 (PDRLISAVSG…FGIVQRLEFY (182 aa)) is large ATPase domain (RuvB-L). ATP contacts are provided by residues Ile24, Arg25, Gly66, Lys69, Thr70, Thr71, 132 to 134 (EDF), Arg175, Tyr185, and Arg222. Residue Thr70 participates in Mg(2+) binding. The small ATPAse domain (RuvB-S) stretch occupies residues 186-256 (NVEDLATIVS…IADKALNLLD (71 aa)). The interval 259–352 (ERGFDHLDRR…SDLFTSEDGN (94 aa)) is head domain (RuvB-H). 3 residues coordinate DNA: Arg295, Arg314, and Arg319.

This sequence belongs to the RuvB family. In terms of assembly, homohexamer. Forms an RuvA(8)-RuvB(12)-Holliday junction (HJ) complex. HJ DNA is sandwiched between 2 RuvA tetramers; dsDNA enters through RuvA and exits via RuvB. An RuvB hexamer assembles on each DNA strand where it exits the tetramer. Each RuvB hexamer is contacted by two RuvA subunits (via domain III) on 2 adjacent RuvB subunits; this complex drives branch migration. In the full resolvosome a probable DNA-RuvA(4)-RuvB(12)-RuvC(2) complex forms which resolves the HJ.

The protein resides in the cytoplasm. It carries out the reaction ATP + H2O = ADP + phosphate + H(+). Its function is as follows. The RuvA-RuvB-RuvC complex processes Holliday junction (HJ) DNA during genetic recombination and DNA repair, while the RuvA-RuvB complex plays an important role in the rescue of blocked DNA replication forks via replication fork reversal (RFR). RuvA specifically binds to HJ cruciform DNA, conferring on it an open structure. The RuvB hexamer acts as an ATP-dependent pump, pulling dsDNA into and through the RuvAB complex. RuvB forms 2 homohexamers on either side of HJ DNA bound by 1 or 2 RuvA tetramers; 4 subunits per hexamer contact DNA at a time. Coordinated motions by a converter formed by DNA-disengaged RuvB subunits stimulates ATP hydrolysis and nucleotide exchange. Immobilization of the converter enables RuvB to convert the ATP-contained energy into a lever motion, pulling 2 nucleotides of DNA out of the RuvA tetramer per ATP hydrolyzed, thus driving DNA branch migration. The RuvB motors rotate together with the DNA substrate, which together with the progressing nucleotide cycle form the mechanistic basis for DNA recombination by continuous HJ branch migration. Branch migration allows RuvC to scan DNA until it finds its consensus sequence, where it cleaves and resolves cruciform DNA. This is Holliday junction branch migration complex subunit RuvB from Pseudomonas paraeruginosa (strain DSM 24068 / PA7) (Pseudomonas aeruginosa (strain PA7)).